A 130-amino-acid chain; its full sequence is Small ribosomal subunit protein uS8 (130 aa).

This sequence belongs to the universal ribosomal protein uS8 family. As to quaternary structure, part of the 30S ribosomal subunit.

In terms of biological role, one of the primary rRNA binding proteins, it binds directly to 16S rRNA central domain where it helps coordinate assembly of the platform of the 30S subunit. This is Small ribosomal subunit protein uS8 from Haloquadratum walsbyi (strain DSM 16790 / HBSQ001).